Here is a 167-residue protein sequence, read N- to C-terminus: Zymogen granule membrane protein 16 (167 aa).

The first 16 residues, 1–16 (MLTVALLALLCASASG), serve as a signal peptide directing secretion. The Jacalin-type lectin domain occupies 24 to 159 (SSYSGEYGGG…IDAIGLHWDV (136 aa)).

It belongs to the jacalin lectin family. Highly expressed in liver. Detected at lower levels in colon, ileum and jejunum.

The protein localises to the secreted. It localises to the extracellular space. The protein resides in the extracellular matrix. It is found in the zymogen granule lumen. Its subcellular location is the golgi apparatus lumen. Functionally, may play a role in protein trafficking. May act as a linker molecule between the submembranous matrix on the luminal side of zymogen granule membrane (ZGM) and aggregated secretory proteins during granule formation in the TGN. The sequence is that of Zymogen granule membrane protein 16 (ZG16) from Homo sapiens (Human).